Consider the following 139-residue polypeptide: Putative nickel-responsive regulator (139 aa).

The Ni(2+) site is built by histidine 79, histidine 90, histidine 92, and cysteine 98.

Belongs to the transcriptional regulatory CopG/NikR family. It depends on Ni(2+) as a cofactor.

Functionally, transcriptional regulator. This Anaeromyxobacter dehalogenans (strain 2CP-1 / ATCC BAA-258) protein is Putative nickel-responsive regulator.